The sequence spans 377 residues: Cobalt-precorrin-5B C(1)-methyltransferase (377 aa).

Belongs to the CbiD family.

It catalyses the reaction Co-precorrin-5B + S-adenosyl-L-methionine = Co-precorrin-6A + S-adenosyl-L-homocysteine. It participates in cofactor biosynthesis; adenosylcobalamin biosynthesis; cob(II)yrinate a,c-diamide from sirohydrochlorin (anaerobic route): step 6/10. In terms of biological role, catalyzes the methylation of C-1 in cobalt-precorrin-5B to form cobalt-precorrin-6A. The protein is Cobalt-precorrin-5B C(1)-methyltransferase of Alkaliphilus metalliredigens (strain QYMF).